Consider the following 438-residue polypeptide: MFKVKFADIGEGLTEGTVAEVLVKVGDVVKEGQSLYFVETDKVNSEIPAPVAGKIAVINIKAGQEIKVGDVVMEIEDGSDTSATSEPKAETKSEAKVEVVEENASVVGATPVSNDVIVRKQTTTVNKSSTIKATPLARKVAADLNIDLSLVTPTGPNQRILVADIKNHQASSTQLASQPISQPAPTPSPSAHQTIAPTIKVVEPSAPLSWDEVPMNGVRKATVKAMTKSHTEIAAFTGMKNTDITETHKMRTELKDHAAASGIKLTYLAFIIKAVAKSLRDMPNINVRGDFANNKIQFMHNINIGIAVDTPNGLMVPVIKGADHLSVFEIAIKISELANKAKDGKLTRAEMTEATFTVSNFGSVGLDYATPIINSPESAILGVGTMSQTPLYINGELQKRFIMPLSMTCDHRIIDGADAGRFLIKVQDYLSKPVLLFM.

The region spanning 1–76 is the Lipoyl-binding domain; that stretch reads MFKVKFADIG…KVGDVVMEIE (76 aa). N6-lipoyllysine is present on K42. Residues 132 to 169 form the Peripheral subunit-binding (PSBD) domain; it reads KATPLARKVAADLNIDLSLVTPTGPNQRILVADIKNHQ. A compositionally biased stretch (polar residues) spans 172–181; sequence STQLASQPIS. Positions 172–192 are disordered; it reads STQLASQPISQPAPTPSPSAH. H411 is a catalytic residue.

It belongs to the 2-oxoacid dehydrogenase family. Forms a 24-polypeptide structural core with octahedral symmetry. (R)-lipoate is required as a cofactor.

It catalyses the reaction N(6)-[(R)-dihydrolipoyl]-L-lysyl-[protein] + acetyl-CoA = N(6)-[(R)-S(8)-acetyldihydrolipoyl]-L-lysyl-[protein] + CoA. In terms of biological role, the pyruvate dehydrogenase complex catalyzes the overall conversion of pyruvate to acetyl-CoA and CO(2). It contains multiple copies of three enzymatic components: pyruvate dehydrogenase (E1), dihydrolipoamide acetyltransferase (E2) and lipoamide dehydrogenase (E3). This is Dihydrolipoyllysine-residue acetyltransferase component of pyruvate dehydrogenase complex (pdhC) from Mycoplasma capricolum subsp. capricolum (strain California kid / ATCC 27343 / NCTC 10154).